The chain runs to 360 residues: Phosphoserine aminotransferase (360 aa).

Arg41 provides a ligand contact to L-glutamate. Residues 75 to 76 (AS), Trp99, Thr152, Asp171, and Gln194 each bind pyridoxal 5'-phosphate. Lys195 is subject to N6-(pyridoxal phosphate)lysine. 236–237 (NT) contributes to the pyridoxal 5'-phosphate binding site.

It belongs to the class-V pyridoxal-phosphate-dependent aminotransferase family. SerC subfamily. As to quaternary structure, homodimer. Requires pyridoxal 5'-phosphate as cofactor.

It is found in the cytoplasm. The catalysed reaction is O-phospho-L-serine + 2-oxoglutarate = 3-phosphooxypyruvate + L-glutamate. It carries out the reaction 4-(phosphooxy)-L-threonine + 2-oxoglutarate = (R)-3-hydroxy-2-oxo-4-phosphooxybutanoate + L-glutamate. Its pathway is amino-acid biosynthesis; L-serine biosynthesis; L-serine from 3-phospho-D-glycerate: step 2/3. The protein operates within cofactor biosynthesis; pyridoxine 5'-phosphate biosynthesis; pyridoxine 5'-phosphate from D-erythrose 4-phosphate: step 3/5. Catalyzes the reversible conversion of 3-phosphohydroxypyruvate to phosphoserine and of 3-hydroxy-2-oxo-4-phosphonooxybutanoate to phosphohydroxythreonine. This Porphyromonas gingivalis (strain ATCC 33277 / DSM 20709 / CIP 103683 / JCM 12257 / NCTC 11834 / 2561) protein is Phosphoserine aminotransferase.